The following is a 950-amino-acid chain: Leucine--tRNA ligase (950 aa).

The short motif at 66 to 77 is the 'HIGH' region element; the sequence is PYPSGAGLHVGH. The 'KMSKS' region signature appears at 721–725; that stretch reads KIGKS. K724 is an ATP binding site.

Belongs to the class-I aminoacyl-tRNA synthetase family.

Its subcellular location is the cytoplasm. It catalyses the reaction tRNA(Leu) + L-leucine + ATP = L-leucyl-tRNA(Leu) + AMP + diphosphate. This is Leucine--tRNA ligase from Nocardia farcinica (strain IFM 10152).